We begin with the raw amino-acid sequence, 209 residues long: Nucleoside triphosphate pyrophosphatase (209 aa).

The active-site Proton acceptor is the D79.

It belongs to the Maf family. The cofactor is a divalent metal cation.

It is found in the cytoplasm. The catalysed reaction is a ribonucleoside 5'-triphosphate + H2O = a ribonucleoside 5'-phosphate + diphosphate + H(+). It carries out the reaction a 2'-deoxyribonucleoside 5'-triphosphate + H2O = a 2'-deoxyribonucleoside 5'-phosphate + diphosphate + H(+). Nucleoside triphosphate pyrophosphatase. May have a dual role in cell division arrest and in preventing the incorporation of modified nucleotides into cellular nucleic acids. This is Nucleoside triphosphate pyrophosphatase from Mycolicibacterium vanbaalenii (strain DSM 7251 / JCM 13017 / BCRC 16820 / KCTC 9966 / NRRL B-24157 / PYR-1) (Mycobacterium vanbaalenii).